The sequence spans 381 residues: MNLNFMPLLHAYNHASIDFHFNSSARDFCVHEVPLYEFSNTGEHAVIQVRKSGLSTLEMLQIFSQILGVKIAELGYAGLKDKNALTTQFISLPKKYAPLLEKNTHNLQERNLKILSLNYHHNKIKLGHLKGNRFFMRFKKMTPLNAQKTKQVLEQIARFGMPNYFGSQRFGKFNDNHKEGLKILQNQTKFAHQKLNAFLISSYQSYLFNALLSKRLEISKIISAFSLKENLEFFKQNNLSVNSNALKALKNQAHPFKILEGDVMCHYPYGKFFDALELGKEGERFLNKEAAPTGLLDGKKALYAKNLSFEIEKEFQHNLLSSHAKTLGSRRFFWVFAENVTSQYMKEKAQFELGFYLPKGSYASALLKKIKHEKGEKYDKF.

Asp-81 acts as the Nucleophile in catalysis. One can recognise a TRUD domain in the interval 160–335 (GMPNYFGSQR…TLGSRRFFWV (176 aa)).

This sequence belongs to the pseudouridine synthase TruD family.

The enzyme catalyses uridine(13) in tRNA = pseudouridine(13) in tRNA. Responsible for synthesis of pseudouridine from uracil-13 in transfer RNAs. This chain is tRNA pseudouridine synthase D, found in Helicobacter pylori (strain P12).